Here is a 456-residue protein sequence, read N- to C-terminus: RuvB-like helicase 1 (456 aa).

Position 70–77 (70–77 (GPPGTGKT)) interacts with ATP.

It belongs to the RuvB family. As to quaternary structure, forms homohexameric rings. May form a dodecamer with rept made of two stacked hexameric rings. Component of the chromatin remodeling Ino80 complex. Interacts with Myc and rept. As to expression, higher expression occurs in primordia of mesoderm, anterior and posterior midgut and cephalic furrow early in gastrulation, as well as in endoderm and mesoderm lineages during germ band extension. Later in development expression is only maintained in endoderm cells. Expressed in thoracic and abdominal segment neural precursors of all embryonic chordotonal organs.

The protein resides in the nucleus. The catalysed reaction is ATP + H2O = ADP + phosphate + H(+). Its function is as follows. Acts as a transcriptional coactivator in Wg signaling caused by altered arm signaling. Pont and rept interfere antagonistically with nuclear arm signaling function, and are required to enhance or reduce arm activity, respectively. Also an essential cofactor for the normal function of Myc; required for cellular proliferation and growth. Proposed core component of the chromatin remodeling Ino80 complex which is involved in transcriptional regulation, DNA replication and probably DNA repair. The polypeptide is RuvB-like helicase 1 (Drosophila melanogaster (Fruit fly)).